A 495-amino-acid polypeptide reads, in one-letter code: Acetyl-coenzyme A carboxylase carboxyl transferase subunit beta, chloroplastic (495 aa).

The tract at residues 187 to 208 is disordered; it reads ESRNSSENEGSSRRTRTKGSDL. One can recognise a CoA carboxyltransferase N-terminal domain in the interval 226 to 495; the sequence is LWVQCENCYG…PLNQKSSKIK (270 aa). Zn(2+) contacts are provided by C230, C233, C249, and C252. A C4-type zinc finger spans residues 230-252; the sequence is CENCYGLNYKKFLKSKMNICEQC.

Belongs to the AccD/PCCB family. Acetyl-CoA carboxylase is a heterohexamer composed of biotin carboxyl carrier protein, biotin carboxylase and 2 subunits each of ACCase subunit alpha and ACCase plastid-coded subunit beta (accD). Zn(2+) is required as a cofactor. As to expression, RNA expressed in leaf, root and stem; the least expression occurs in stems.

The protein resides in the plastid. The protein localises to the chloroplast stroma. It catalyses the reaction N(6)-carboxybiotinyl-L-lysyl-[protein] + acetyl-CoA = N(6)-biotinyl-L-lysyl-[protein] + malonyl-CoA. It participates in lipid metabolism; malonyl-CoA biosynthesis; malonyl-CoA from acetyl-CoA: step 1/1. Functionally, component of the acetyl coenzyme A carboxylase (ACC) complex. Biotin carboxylase (BC) catalyzes the carboxylation of biotin on its carrier protein (BCCP) and then the CO(2) group is transferred by the transcarboxylase to acetyl-CoA to form malonyl-CoA. The polypeptide is Acetyl-coenzyme A carboxylase carboxyl transferase subunit beta, chloroplastic (Nicotiana tabacum (Common tobacco)).